The sequence spans 299 residues: ATP phosphoribosyltransferase (299 aa).

Belongs to the ATP phosphoribosyltransferase family. Long subfamily. In terms of assembly, equilibrium between an active dimeric form, an inactive hexameric form and higher aggregates. Interconversion between the various forms is largely reversible and is influenced by the natural substrates and inhibitors of the enzyme. Mg(2+) serves as cofactor.

The protein localises to the cytoplasm. The catalysed reaction is 1-(5-phospho-beta-D-ribosyl)-ATP + diphosphate = 5-phospho-alpha-D-ribose 1-diphosphate + ATP. It participates in amino-acid biosynthesis; L-histidine biosynthesis; L-histidine from 5-phospho-alpha-D-ribose 1-diphosphate: step 1/9. With respect to regulation, feedback inhibited by histidine. In terms of biological role, catalyzes the condensation of ATP and 5-phosphoribose 1-diphosphate to form N'-(5'-phosphoribosyl)-ATP (PR-ATP). Has a crucial role in the pathway because the rate of histidine biosynthesis seems to be controlled primarily by regulation of HisG enzymatic activity. The chain is ATP phosphoribosyltransferase from Escherichia coli O157:H7.